A 128-amino-acid polypeptide reads, in one-letter code: Cyclin-dependent protein kinase inhibitor SMR1 (128 aa).

The interval 17-74 is disordered; it reads PIKIRSKTSKTKKDEGDDDEDDLRCSTPTSQEHKIPAVVDSPPPPPRKPRPPPSAPSA. The span at 57 to 71 shows a compositional bias: pro residues; sequence SPPPPPRKPRPPPSA.

In terms of assembly, interacts with CDKB1-1. Interacts with CPR5. As to expression, expressed in roots, leaves, stems, siliques and flowers. Expressed in the root elongation zone.

It is found in the nucleus. In terms of biological role, probable cyclin-dependent protein kinase (CDK) inhibitor that functions as a repressor of mitosis in the endoreduplication cell cycle. Cooperates with SIM and SMR2 to promote endoreplication during leaf development. Specifically regulates endoreduplication in epidermal pavement cells to produce the cell size pattern. Is necessary for giant cell formation. Positive regulator of effector-triggered immunity (ETI). In Arabidopsis thaliana (Mouse-ear cress), this protein is Cyclin-dependent protein kinase inhibitor SMR1.